A 60-amino-acid polypeptide reads, in one-letter code: UPF0291 protein CTC_01690.1 (60 aa).

It belongs to the UPF0291 family.

The protein localises to the cytoplasm. The polypeptide is UPF0291 protein CTC_01690.1 (Clostridium tetani (strain Massachusetts / E88)).